Here is a 464-residue protein sequence, read N- to C-terminus: Hydrogen cyanide synthase subunit HcnB (464 aa).

As to quaternary structure, heterotrimer of HcnA, HcnB and HcnC.

The protein resides in the cell membrane. The enzyme catalyses glycine + 2 A = hydrogen cyanide + 2 AH2 + CO2. Its activity is regulated as follows. Oxygen is necessary for cyanogenesis. Activated by succinate, glycine methyl ester, glucose and D,L-methionine in addition to glycine. Phenazine methosulfate, methylene blue, 2,6-dichlorophenolindophenol (DCIP) and ferricyanide can replace oxygen for the reaction. Inhibited by pyrrolnitrin and acriflavine at 1 mM concentration. Its function is as follows. A three-component membrane-bound flavoenzyme that catalyzes the formation of hydrogen cyanide, a secondary metabolite, by transfer of electrons to a cyanide-resistant branch of the aerobic respiratory chain. In Pseudomonas aeruginosa (strain ATCC 15692 / DSM 22644 / CIP 104116 / JCM 14847 / LMG 12228 / 1C / PRS 101 / PAO1), this protein is Hydrogen cyanide synthase subunit HcnB.